The chain runs to 135 residues: Phosphomevalonate dehydratase small subunit (135 aa).

S67 (proton acceptor) is an active-site residue.

It belongs to the AcnX type II small subunit family. As to quaternary structure, heterodimer composed of a large subunit (PMDh-L) and a small subunit (PMDh-S).

It carries out the reaction (R)-5-phosphomevalonate = (2E)-3-methyl-5-phosphooxypent-2-enoate + H2O. The protein operates within isoprenoid biosynthesis; isopentenyl diphosphate biosynthesis via mevalonate pathway. Its function is as follows. Component of a hydro-lyase that catalyzes the dehydration of mevalonate 5-phosphate (MVA5P) to form trans-anhydromevalonate 5-phosphate (tAHMP). Involved in the archaeal mevalonate (MVA) pathway, which provides fundamental precursors for isoprenoid biosynthesis, such as isopentenyl diphosphate (IPP) and dimethylallyl diphosphate (DMAPP). This Methanopyrus kandleri (strain AV19 / DSM 6324 / JCM 9639 / NBRC 100938) protein is Phosphomevalonate dehydratase small subunit.